Here is a 96-residue protein sequence, read N- to C-terminus: Large ribosomal subunit protein bL28 (96 aa).

The tract at residues 1 to 23 is disordered; sequence MSRVCELSGKAPMTGNTVSHANN.

This sequence belongs to the bacterial ribosomal protein bL28 family.

The polypeptide is Large ribosomal subunit protein bL28 (Cereibacter sphaeroides (strain ATCC 17029 / ATH 2.4.9) (Rhodobacter sphaeroides)).